The following is a 542-amino-acid chain: Protein lin-9 homolog (542 aa).

Position 2 is an N-acetylalanine (alanine 2). Residues 2–296 form a sufficient for interaction with RB1 region; sequence AELDQLPDES…QKQRPSRFFM (295 aa). A Glycyl lysine isopeptide (Lys-Gly) (interchain with G-Cter in SUMO2) cross-link involves residue lysine 21. Residues serine 65 and serine 95 each carry the phosphoserine modification. Residues threonine 96 and threonine 304 each carry the phosphothreonine modification. Phosphoserine occurs at positions 309 and 321. Residues 355–413 adopt a coiled-coil conformation; it reads IKKEHIKKLREMNTDAEKLKSYSMPISIEFQRRYATIVLELEQLNKDLNKVLHKVQQYC.

Belongs to the lin-9 family. Component of the DREAM complex (also named LINC complex) at least composed of E2F4, E2F5, LIN9, LIN37, LIN52, LIN54, MYBL1, MYBL2, RBL1, RBL2, RBBP4, TFDP1 and TFDP2. The complex exists in quiescent cells where it represses cell cycle-dependent genes. It dissociates in S phase when LIN9, LIN37, LIN52 and LIN54 form a subcomplex that binds to MYBL2. Interacts with RB1.

The protein localises to the nucleus. The protein resides in the nucleoplasm. Its function is as follows. Acts as a tumor suppressor. Inhibits DNA synthesis. Its ability to inhibit oncogenic transformation is mediated through its association with RB1. Plays a role in the expression of genes required for the G1/S transition. The polypeptide is Protein lin-9 homolog (LIN9) (Macaca fascicularis (Crab-eating macaque)).